We begin with the raw amino-acid sequence, 217 residues long: 3,4-dihydroxy-2-butanone 4-phosphate synthase (217 aa).

Residues 37–38, Asp-42, 150–154, and Glu-174 contribute to the D-ribulose 5-phosphate site; these read RE and RGGHT. Residue Glu-38 participates in Mg(2+) binding. His-153 provides a ligand contact to Mg(2+).

It belongs to the DHBP synthase family. As to quaternary structure, homodimer. Mg(2+) is required as a cofactor. It depends on Mn(2+) as a cofactor.

It catalyses the reaction D-ribulose 5-phosphate = (2S)-2-hydroxy-3-oxobutyl phosphate + formate + H(+). It participates in cofactor biosynthesis; riboflavin biosynthesis; 2-hydroxy-3-oxobutyl phosphate from D-ribulose 5-phosphate: step 1/1. Its function is as follows. Catalyzes the conversion of D-ribulose 5-phosphate to formate and 3,4-dihydroxy-2-butanone 4-phosphate. In Salmonella paratyphi A (strain ATCC 9150 / SARB42), this protein is 3,4-dihydroxy-2-butanone 4-phosphate synthase.